Consider the following 129-residue polypeptide: uncharacterized protein (129 aa).

This is an uncharacterized protein from Streptococcus pyogenes serotype M6 (strain ATCC BAA-946 / MGAS10394).